The sequence spans 244 residues: Aspartate/glutamate leucyltransferase (244 aa).

This sequence belongs to the R-transferase family. Bpt subfamily.

It is found in the cytoplasm. The catalysed reaction is N-terminal L-glutamyl-[protein] + L-leucyl-tRNA(Leu) = N-terminal L-leucyl-L-glutamyl-[protein] + tRNA(Leu) + H(+). It carries out the reaction N-terminal L-aspartyl-[protein] + L-leucyl-tRNA(Leu) = N-terminal L-leucyl-L-aspartyl-[protein] + tRNA(Leu) + H(+). In terms of biological role, functions in the N-end rule pathway of protein degradation where it conjugates Leu from its aminoacyl-tRNA to the N-termini of proteins containing an N-terminal aspartate or glutamate. In Paramagnetospirillum magneticum (strain ATCC 700264 / AMB-1) (Magnetospirillum magneticum), this protein is Aspartate/glutamate leucyltransferase.